We begin with the raw amino-acid sequence, 261 residues long: uncharacterized protein (261 aa).

Positions 1 to 22 (MRDSKRVVLYISIIVLSIFIIG) are cleaved as a signal peptide. C23 carries N-palmitoyl cysteine lipidation. Residue C23 is the site of S-diacylglycerol cysteine attachment.

This sequence belongs to the staphylococcal tandem lipoprotein family.

It localises to the cell membrane. This is an uncharacterized protein from Staphylococcus aureus (strain Mu50 / ATCC 700699).